The following is an 892-amino-acid chain: LEAF RUST 10 DISEASE-RESISTANCE LOCUS RECEPTOR-LIKE PROTEIN KINASE-like 2.8 (892 aa).

The signal sequence occupies residues 1–27; that stretch reads MYYHSLSSYSILFFLFSLFHHLPCASS. At 28–496 the chain is on the extracellular side; that stretch reads NQGLGWCESL…RFIATLVRYT (469 aa). N-linked (GlcNAc...) asparagine glycosylation is found at N42, N71, N88, N112, N186, N222, N230, N286, N358, N384, N407, and N458. A helical transmembrane segment spans residues 497–517; sequence FIALGALTGVVIVFLVLLCPC. Residues 518–892 lie on the Cytoplasmic side of the membrane; that stretch reads FRVQIFRKRK…TNSKLESSSL (375 aa). T547 carries the post-translational modification Phosphothreonine. Residues 556–854 enclose the Protein kinase domain; that stretch reads KSFTEVVGRG…ALEVPPRPVL (299 aa). Residues 562–570 and K584 contribute to the ATP site; that span reads VGRGGFGIV. Residue Y629 is modified to Phosphotyrosine. The active-site Proton acceptor is D680. Phosphothreonine is present on residues T717 and T720.

The protein belongs to the protein kinase superfamily. Ser/Thr protein kinase family.

Its subcellular location is the membrane. The catalysed reaction is L-seryl-[protein] + ATP = O-phospho-L-seryl-[protein] + ADP + H(+). It catalyses the reaction L-threonyl-[protein] + ATP = O-phospho-L-threonyl-[protein] + ADP + H(+). The chain is LEAF RUST 10 DISEASE-RESISTANCE LOCUS RECEPTOR-LIKE PROTEIN KINASE-like 2.8 from Arabidopsis thaliana (Mouse-ear cress).